Reading from the N-terminus, the 513-residue chain is MKLFSASVFAAIIASHYASATAHIRAPNVKPRRTNSLLTAPPQQPPLPSAQQAASASSSAGLNLTDIQGDILIGMKKNKELFFFFSITDAATFKAKLGSDILELITSTNQLLAVATQPITAVNVAFSSTGLKALGITDDLKDPVFEAGMLSNAVSDLSDPGTGNWVPGFVGTSVHGVFLLASDTIDNVNTELANIQTILNGSITEIHRLQGEARPGDQQGHEHFGFMDGISNPAVDGFTPPAEIRPGQALIPPGIMLLGEANDTFQNDRPPWAKDGSFLVFRQMQQRAPEFNKFLQDHALNMPNMTSEQGADLLGARIVGRWKSDAPIDLTPLVDDPVLAADNQRNNNFDFSDATNQTRCPFSAHIRKANPRGDLGGINKFPNQHIIRAGIPYGPEVTDAEKASNSSSTDPSLERGLAFVAYQSNIQNGFVFLQKNWVDNTNFFRPGTGVDPLIGTNSRNSGTDAPNTPRVVSGLDPNNATSTIEIGIDFVVSRGGEYFFSPSLSAIRTVLSV.

A signal peptide spans 1–20 (MKLFSASVFAAIIASHYASA). Residues 21 to 55 (TAHIRAPNVKPRRTNSLLTAPPQQPPLPSAQQAAS) constitute a propeptide that is removed on maturation. Residues 33–52 (RTNSLLTAPPQQPPLPSAQQ) form a disordered region. Aspartate 228 serves as the catalytic Proton acceptor. Histidine 365 provides a ligand contact to heme.

In terms of assembly, homodimer. Requires heme b as cofactor.

The protein localises to the secreted. The catalysed reaction is Reactive Blue 5 + 2 H2O2 = 2,2'-disulfonyl azobenzene + 3-[(4-amino-6-chloro-1,3,5-triazin-2-yl)amino]benzenesulfonate + phthalate + 2 H2O + 2 H(+). It catalyses the reaction 2 a phenolic donor + H2O2 = 2 a phenolic radical donor + 2 H2O. Manganese-independent peroxidase that is able to convert a large number of compounds, but its physiological substrate is not known. In addition to classic peroxidase substrates (e.g. 2,6-dimethoxyphenol), oxidizes dyes such as Reactive Blue 5. Also degrades beta-carotene. This Mycetinis scorodonius (Garlic mushroom) protein is Dye-decolorizing peroxidase msp1.